The primary structure comprises 92 residues: UPF0223 protein EF_2462 (92 aa).

The protein belongs to the UPF0223 family.

The protein is UPF0223 protein EF_2462 of Enterococcus faecalis (strain ATCC 700802 / V583).